A 367-amino-acid chain; its full sequence is tRNA-specific 2-thiouridylase MnmA (367 aa).

Residues Ala24–Ser31 and Leu50 each bind ATP. Catalysis depends on Cys115, which acts as the Nucleophile. An intrachain disulfide couples Cys115 to Cys211. Gly139 is a binding site for ATP. The interaction with tRNA stretch occupies residues Lys161 to Gln163. Cys211 (cysteine persulfide intermediate) is an active-site residue.

The protein belongs to the MnmA/TRMU family.

The protein localises to the cytoplasm. It carries out the reaction S-sulfanyl-L-cysteinyl-[protein] + uridine(34) in tRNA + AH2 + ATP = 2-thiouridine(34) in tRNA + L-cysteinyl-[protein] + A + AMP + diphosphate + H(+). Catalyzes the 2-thiolation of uridine at the wobble position (U34) of tRNA, leading to the formation of s(2)U34. This Ehrlichia canis (strain Jake) protein is tRNA-specific 2-thiouridylase MnmA.